A 333-amino-acid chain; its full sequence is DNA primase small subunit PriS (333 aa).

Residues Asp-96, Asp-98, and Asp-237 contribute to the active site.

The protein belongs to the eukaryotic-type primase small subunit family. As to quaternary structure, heterodimer of a small subunit (PriS) and a large subunit (PriL). It depends on Mg(2+) as a cofactor. The cofactor is Mn(2+).

In terms of biological role, catalytic subunit of DNA primase, an RNA polymerase that catalyzes the synthesis of short RNA molecules used as primers for DNA polymerase during DNA replication. The small subunit contains the primase catalytic core and has DNA synthesis activity on its own. Binding to the large subunit stabilizes and modulates the activity, increasing the rate of DNA synthesis while decreasing the length of the DNA fragments, and conferring RNA synthesis capability. The DNA polymerase activity may enable DNA primase to also catalyze primer extension after primer synthesis. May also play a role in DNA repair. This Thermoplasma volcanium (strain ATCC 51530 / DSM 4299 / JCM 9571 / NBRC 15438 / GSS1) protein is DNA primase small subunit PriS.